The sequence spans 99 residues: Phosphoribosyl-ATP pyrophosphatase (99 aa).

It belongs to the PRA-PH family.

The protein localises to the cytoplasm. The enzyme catalyses 1-(5-phospho-beta-D-ribosyl)-ATP + H2O = 1-(5-phospho-beta-D-ribosyl)-5'-AMP + diphosphate + H(+). It participates in amino-acid biosynthesis; L-histidine biosynthesis; L-histidine from 5-phospho-alpha-D-ribose 1-diphosphate: step 2/9. The polypeptide is Phosphoribosyl-ATP pyrophosphatase (Methanococcoides burtonii (strain DSM 6242 / NBRC 107633 / OCM 468 / ACE-M)).